The chain runs to 473 residues: 1-aminocyclopropane-1-carboxylate synthase (473 aa).

Substrate contacts are provided by residues 84–85, Y145, and D151; that span reads DY. The residue at position 273 (K273) is an N6-(pyridoxal phosphate)lysine.

The protein belongs to the class-I pyridoxal-phosphate-dependent aminotransferase family. As to quaternary structure, homodimer. The cofactor is pyridoxal 5'-phosphate.

It catalyses the reaction S-adenosyl-L-methionine = 1-aminocyclopropane-1-carboxylate + S-methyl-5'-thioadenosine + H(+). It carries out the reaction (2S)-2-amino-3-butenoate + H2O = 2-oxobutanoate + NH4(+). Its pathway is alkene biosynthesis; ethylene biosynthesis via S-adenosyl-L-methionine; ethylene from S-adenosyl-L-methionine: step 1/2. Its activity is regulated as follows. Inhibited by L-aminoethoxyvinylglycine (AVG). Inhibited by L-vinylglycine (L-VG). Inhibited by S-methylmethionine through a L-VG ketimine intermediate. Catalyzes the formation of 1-aminocyclopropane-1-carboxylate, a direct precursor of ethylene in higher plants. Also catalyzes the conversion of L-vinylglycine (L-VG) to alpha-ketobutyrate and ammonia. Can use S-methylmethionine as substrate. The polypeptide is 1-aminocyclopropane-1-carboxylate synthase (Malus domestica (Apple)).